Here is a 670-residue protein sequence, read N- to C-terminus: Thrombospondin-type laminin G domain and EAR repeat-containing protein (670 aa).

Positions 1-20 (MSALLMLCAVLLLLGTPSRG) are cleaved as a signal peptide. The Laminin G-like domain occupies 59–278 (GLQFSATEPR…KVTLGSRPPC (220 aa)). EAR repeat units follow at residues 314 to 359 (DYVE…KWTD), 361 to 409 (KFVS…KWSP), 413 to 461 (KFTL…RWNP), 465 to 513 (LFEA…IWLV), 515 to 571 (AFQL…ELNI), 575 to 623 (TFVK…RWQG), and 626 to 669 (GFVA…KLRT). The N-linked (GlcNAc...) asparagine glycan is linked to Asn-498.

In the organ of Corti, expression at postnatal day 1 (P1) is restricted to the basal region of the stereocilia of inner and outer hair cells (at protein level). Expressed in the organ of Corti at P1 and P7, in cochlear ganglion, stria vascularis and vestibular ends at P7, and in inferior colliculus, remaining brainstem, cerebellum, brain hemispheres and retina at P1, P7 and in the adult. Also detected in adult liver, lung, kidney, intestine and testis but not in heart or skeletal muscle.

Its subcellular location is the secreted. The protein resides in the cell surface. The protein localises to the cell projection. It is found in the stereocilium. Its function is as follows. Plays a critical role in tooth and hair follicle morphogenesis through regulation of the Notch signaling pathway. May play a role in development or function of the auditory system. This is Thrombospondin-type laminin G domain and EAR repeat-containing protein from Mus musculus (Mouse).